The primary structure comprises 156 residues: Small ribosomal subunit protein uS7 (156 aa).

This sequence belongs to the universal ribosomal protein uS7 family. As to quaternary structure, part of the 30S ribosomal subunit. Contacts proteins S9 and S11.

One of the primary rRNA binding proteins, it binds directly to 16S rRNA where it nucleates assembly of the head domain of the 30S subunit. Is located at the subunit interface close to the decoding center, probably blocks exit of the E-site tRNA. The protein is Small ribosomal subunit protein uS7 of Novosphingobium aromaticivorans (strain ATCC 700278 / DSM 12444 / CCUG 56034 / CIP 105152 / NBRC 16084 / F199).